Here is a 107-residue protein sequence, read N- to C-terminus: MNDSEFHLLADGLMQALEEALDACQSDADIDCETNGGVMTLSFENGSKIVINRQEPLHQIWLATRAGGYHFDYRNGQWRCSRSGVPLPQVLNEACSAQAGIPVTLDL.

It belongs to the frataxin family.

Involved in iron-sulfur (Fe-S) cluster assembly. May act as a regulator of Fe-S biogenesis. The sequence is that of Iron-sulfur cluster assembly protein CyaY from Edwardsiella ictaluri (strain 93-146).